The following is a 420-amino-acid chain: D-tagatose-1,6-bisphosphate aldolase subunit GatZ (420 aa).

It belongs to the GatZ/KbaZ family. GatZ subfamily. Forms a complex with GatY.

It participates in carbohydrate metabolism; D-tagatose 6-phosphate degradation; D-glyceraldehyde 3-phosphate and glycerone phosphate from D-tagatose 6-phosphate: step 2/2. Functionally, component of the tagatose-1,6-bisphosphate aldolase GatYZ that is required for full activity and stability of the Y subunit. Could have a chaperone-like function for the proper and stable folding of GatY. When expressed alone, GatZ does not show any aldolase activity. Is involved in the catabolism of galactitol. The protein is D-tagatose-1,6-bisphosphate aldolase subunit GatZ of Escherichia coli O6:K15:H31 (strain 536 / UPEC).